The following is a 484-amino-acid chain: Glutamyl-tRNA(Gln) amidotransferase subunit A (484 aa).

Active-site charge relay system residues include Lys-78 and Ser-153. Ser-177 functions as the Acyl-ester intermediate in the catalytic mechanism.

This sequence belongs to the amidase family. GatA subfamily. Heterotrimer of A, B and C subunits.

The catalysed reaction is L-glutamyl-tRNA(Gln) + L-glutamine + ATP + H2O = L-glutaminyl-tRNA(Gln) + L-glutamate + ADP + phosphate + H(+). Functionally, allows the formation of correctly charged Gln-tRNA(Gln) through the transamidation of misacylated Glu-tRNA(Gln) in organisms which lack glutaminyl-tRNA synthetase. The reaction takes place in the presence of glutamine and ATP through an activated gamma-phospho-Glu-tRNA(Gln). The chain is Glutamyl-tRNA(Gln) amidotransferase subunit A from Thermodesulfovibrio yellowstonii (strain ATCC 51303 / DSM 11347 / YP87).